A 311-amino-acid polypeptide reads, in one-letter code: Methionyl-tRNA formyltransferase (311 aa).

109–112 contacts (6S)-5,6,7,8-tetrahydrofolate; it reads SLLP.

This sequence belongs to the Fmt family.

It catalyses the reaction L-methionyl-tRNA(fMet) + (6R)-10-formyltetrahydrofolate = N-formyl-L-methionyl-tRNA(fMet) + (6S)-5,6,7,8-tetrahydrofolate + H(+). Attaches a formyl group to the free amino group of methionyl-tRNA(fMet). The formyl group appears to play a dual role in the initiator identity of N-formylmethionyl-tRNA by promoting its recognition by IF2 and preventing the misappropriation of this tRNA by the elongation apparatus. The protein is Methionyl-tRNA formyltransferase of Kosmotoga olearia (strain ATCC BAA-1733 / DSM 21960 / TBF 19.5.1).